The following is a 149-amino-acid chain: Urease accessory protein UreE (149 aa).

The protein belongs to the UreE family.

The protein resides in the cytoplasm. Involved in urease metallocenter assembly. Binds nickel. Probably functions as a nickel donor during metallocenter assembly. This Ureaplasma urealyticum serovar 10 (strain ATCC 33699 / Western) protein is Urease accessory protein UreE.